Consider the following 71-residue polypeptide: Antitoxin ParD2 (71 aa).

Functionally, antitoxin component of a type II toxin-antitoxin (TA) system. The polypeptide is Antitoxin ParD2 (parD2) (Mycobacterium tuberculosis (strain CDC 1551 / Oshkosh)).